We begin with the raw amino-acid sequence, 155 residues long: Ribosomal RNA large subunit methyltransferase H (155 aa).

S-adenosyl-L-methionine-binding positions include L72, G103, and 122–127 (LSPLTL).

The protein belongs to the RNA methyltransferase RlmH family. Homodimer.

It is found in the cytoplasm. It carries out the reaction pseudouridine(1915) in 23S rRNA + S-adenosyl-L-methionine = N(3)-methylpseudouridine(1915) in 23S rRNA + S-adenosyl-L-homocysteine + H(+). Specifically methylates the pseudouridine at position 1915 (m3Psi1915) in 23S rRNA. The protein is Ribosomal RNA large subunit methyltransferase H of Mannheimia succiniciproducens (strain KCTC 0769BP / MBEL55E).